The following is a 126-amino-acid chain: Fluoride-specific ion channel FluC (126 aa).

4 helical membrane-spanning segments follow: residues 2-22, 37-57, 65-85, and 101-121; these read LTFA…GAWL, WGTL…VALI, AWIR…FSTF, and AAAY…LATV. The Na(+) site is built by Gly77 and Thr80.

The protein belongs to the fluoride channel Fluc/FEX (TC 1.A.43) family.

The protein localises to the cell inner membrane. It catalyses the reaction fluoride(in) = fluoride(out). With respect to regulation, na(+) is not transported, but it plays an essential structural role and its presence is essential for fluoride channel function. Functionally, fluoride-specific ion channel. Important for reducing fluoride concentration in the cell, thus reducing its toxicity. This is Fluoride-specific ion channel FluC from Bordetella parapertussis (strain 12822 / ATCC BAA-587 / NCTC 13253).